Consider the following 75-residue polypeptide: Putative membrane protein insertion efficiency factor (75 aa).

Belongs to the UPF0161 family.

Its subcellular location is the cell membrane. In terms of biological role, could be involved in insertion of integral membrane proteins into the membrane. The polypeptide is Putative membrane protein insertion efficiency factor (ytjA) (Bacillus subtilis (strain 168)).